The sequence spans 1240 residues: Selection and upkeep of intraepithelial T-cells protein 6 (1240 aa).

A signal peptide spans 1 to 24 (MGTIGVPLTAHCVVLFLLQMVALS). At 25-1086 (TEQFTVNGLE…CNKRNPFWKK (1062 aa)) the chain is on the extracellular side. One can recognise an Ig-like V-type domain in the interval 26 to 141 (EQFTVNGLES…EEHIIEVKVT (116 aa)). A disulfide bond links Cys-49 and Cys-123. In terms of domain architecture, Ig-like C1-type spans 142-231 (ATSSDIQILM…FVTHQEESIS (90 aa)). Asn-155, Asn-200, and Asn-314 each carry an N-linked (GlcNAc...) asparagine glycan. Cys-163 and Cys-217 form a disulfide bridge. A helical membrane pass occupies residues 1087 to 1107 (HALDLGISVFAIIVVTLIRHL). The Cytoplasmic segment spans residues 1108–1125 (NQREADQHFELDTLWSKD). A helical membrane pass occupies residues 1126 to 1146 (TSVILCVLIMFNNRLKALIYF). The Extracellular portion of the chain corresponds to 1147–1167 (RLYGYSPPGKTYKYIVNYILR). The helical transmembrane segment at 1168–1188 (FSQPLFFIVYSAIILVMHLQI) threads the bilayer. Over 1189–1205 (QNTDSLFSLYNSWMVEM) the chain is Cytoplasmic. The chain crosses the membrane as a helical span at residues 1206–1226 (IMVLGLLLAIFNVKNIATALL). Topologically, residues 1227-1240 (HLGRTTLRLFRIKD) are extracellular.

The protein belongs to the SKINT family. In terms of tissue distribution, expressed in skin.

It is found in the membrane. Its function is as follows. May act by engaging a cell surface molecule on immature T-cells in the embryonic thymus. The sequence is that of Selection and upkeep of intraepithelial T-cells protein 6 (Skint6) from Mus musculus (Mouse).